The following is a 54-amino-acid chain: Hydrophobic protein RCI2B (54 aa).

The next 2 membrane-spanning stretches (helical) occupy residues 2–22 (STAT…GVFL) and 32–52 (ICLI…LYII).

The protein belongs to the UPF0057 (PMP3) family.

Its subcellular location is the membrane. This chain is Hydrophobic protein RCI2B (RCI2B), found in Arabidopsis thaliana (Mouse-ear cress).